Consider the following 408-residue polypeptide: MDKLLERFLNYVSLDTQSKAGVRQVPSTEGQWKLLHLLKEQLEEMGLINVTLSEKGTLMATLPANVPGDIPAIGFISHVDTSPDCSGKNVNPQIVENYRGGDIALGIGDEVLSPVMFPVLHQLLGQTLITTDGKTLLGADDQAGIAEIMTALAVLQQKNIPHGDIRVAFTPDEEVGKGAKHFDVDAFDARWAYTVDGGGVGELEFENFNAASVNIKIVGNNVHPGTAKGVMVNALSLAARIHAEVPADESPEMTEGYEGFYHLASMKGTVERADMHYIIRDFDRKQFEARKRKMMEIAKKVGKGLHPDCYIELVIEDSYYNMREKVVEHPHILDIAQQAMRDCDIEPELKPIRGGTDGAQLSFMGLPCPNLFTGGYNYHGKHEFVTLEGMEKAVQVIVRIAELTAQRK.

Residue histidine 78 participates in Zn(2+) binding. Residue aspartate 80 is part of the active site. Aspartate 140 serves as a coordination point for Zn(2+). Residue glutamate 173 is the Proton acceptor of the active site. Zn(2+) is bound by residues glutamate 174, aspartate 196, and histidine 379.

This sequence belongs to the peptidase M20B family. It depends on Zn(2+) as a cofactor.

The protein resides in the cytoplasm. The catalysed reaction is Release of the N-terminal residue from a tripeptide.. Functionally, cleaves the N-terminal amino acid of tripeptides. This Escherichia coli O6:K15:H31 (strain 536 / UPEC) protein is Peptidase T.